A 592-amino-acid polypeptide reads, in one-letter code: Bifunctional enzyme BirA/CoaX (592 aa).

The interval 1 to 329 is biotin--protein ligase; that stretch reads MTVLKLSHWR…ISLRSDDRPV (329 aa). The region spanning 83 to 259 is the BPL/LPL catalytic domain; that stretch reads QTALKHECAS…ELDAVLLQYA (177 aa). Residues 336–592 form a type III pantothenate kinase region; the sequence is DSERFLLLDG…AAEGREYEHI (257 aa). Residue 344–351 coordinates ATP; that stretch reads DGGNSRLK. Residues Tyr426 and 433–436 each bind substrate; that span reads GSDR. Asp435 acts as the Proton acceptor in catalysis. Residue Thr458 coordinates ATP. Substrate is bound at residue Thr508.

The protein in the N-terminal section; belongs to the biotin--protein ligase family. It in the C-terminal section; belongs to the type III pantothenate kinase family. NH4(+) is required as a cofactor. It depends on K(+) as a cofactor.

Its subcellular location is the cytoplasm. It carries out the reaction biotin + L-lysyl-[protein] + ATP = N(6)-biotinyl-L-lysyl-[protein] + AMP + diphosphate + H(+). It catalyses the reaction (R)-pantothenate + ATP = (R)-4'-phosphopantothenate + ADP + H(+). It participates in cofactor biosynthesis; coenzyme A biosynthesis; CoA from (R)-pantothenate: step 1/5. Activates biotin to form biotinyl-5'-adenylate and transfers the biotin moiety to biotin-accepting proteins. Functionally, catalyzes the phosphorylation of pantothenate (Pan), the first step in CoA biosynthesis. The protein is Bifunctional enzyme BirA/CoaX (birA/coaX) of Neisseria meningitidis serogroup B (strain ATCC BAA-335 / MC58).